The primary structure comprises 68 residues: U2-agatoxin-Ao1u (68 aa).

Residues M1–A20 form the signal peptide. The propeptide occupies V21 to R34. 3 cysteine pairs are disulfide-bonded: C36–C52, C43–C57, and C51–C67.

It belongs to the neurotoxin 01 (U2-agtx) family. As to expression, expressed by the venom gland.

It is found in the secreted. Functionally, insect active toxin causing rapid but reversible paralysis in crickets. No activity shown in mammals. Does not show effect on mammalian voltage-gated calcium channels. The protein is U2-agatoxin-Ao1u of Agelena orientalis (Funnel-web spider).